We begin with the raw amino-acid sequence, 709 residues long: Elongation factor G (709 aa).

The region spanning lysine 6 to leucine 295 is the tr-type G domain. GTP is bound by residues alanine 15–threonine 22, aspartate 92–histidine 96, and asparagine 146–aspartate 149.

It belongs to the TRAFAC class translation factor GTPase superfamily. Classic translation factor GTPase family. EF-G/EF-2 subfamily.

Its subcellular location is the cytoplasm. Functionally, catalyzes the GTP-dependent ribosomal translocation step during translation elongation. During this step, the ribosome changes from the pre-translocational (PRE) to the post-translocational (POST) state as the newly formed A-site-bound peptidyl-tRNA and P-site-bound deacylated tRNA move to the P and E sites, respectively. Catalyzes the coordinated movement of the two tRNA molecules, the mRNA and conformational changes in the ribosome. This chain is Elongation factor G, found in Amoebophilus asiaticus (strain 5a2).